The chain runs to 348 residues: Beta-hexosaminidase (348 aa).

Substrate contacts are provided by residues aspartate 64, arginine 72, arginine 138, and 168-169; that span reads KH. Histidine 181 (proton donor/acceptor) is an active-site residue. Residue aspartate 252 is the Nucleophile of the active site.

It belongs to the glycosyl hydrolase 3 family. NagZ subfamily.

The protein localises to the cytoplasm. It catalyses the reaction Hydrolysis of terminal non-reducing N-acetyl-D-hexosamine residues in N-acetyl-beta-D-hexosaminides.. Its pathway is cell wall biogenesis; peptidoglycan recycling. Functionally, plays a role in peptidoglycan recycling by cleaving the terminal beta-1,4-linked N-acetylglucosamine (GlcNAc) from peptide-linked peptidoglycan fragments, giving rise to free GlcNAc, anhydro-N-acetylmuramic acid and anhydro-N-acetylmuramic acid-linked peptides. The protein is Beta-hexosaminidase of Nitrosomonas eutropha (strain DSM 101675 / C91 / Nm57).